Here is a 432-residue protein sequence, read N- to C-terminus: Putative transposase A625R (432 aa).

Residues cysteine 375, cysteine 378, cysteine 393, and cysteine 395 each coordinate Zn(2+).

In the N-terminal section; belongs to the transposase 2 family. This sequence in the C-terminal section; belongs to the transposase 35 family.

The polypeptide is Putative transposase A625R (Chlorella (PBCV-1)).